A 293-amino-acid chain; its full sequence is 3-methyl-2-oxobutanoate hydroxymethyltransferase (293 aa).

The interval 1-29 is disordered; sequence MTAAHDRSENQPGRPGGETTAPYGSAPRR. The Mg(2+) site is built by D73 and D112. Residues 73-74, D112, and K142 each bind 3-methyl-2-oxobutanoate; that span reads DS. Mg(2+) is bound at residue E144. The Proton acceptor role is filled by E210.

It belongs to the PanB family. In terms of assembly, homodecamer; pentamer of dimers. Requires Mg(2+) as cofactor.

The protein localises to the cytoplasm. It carries out the reaction 3-methyl-2-oxobutanoate + (6R)-5,10-methylene-5,6,7,8-tetrahydrofolate + H2O = 2-dehydropantoate + (6S)-5,6,7,8-tetrahydrofolate. It participates in cofactor biosynthesis; (R)-pantothenate biosynthesis; (R)-pantoate from 3-methyl-2-oxobutanoate: step 1/2. Catalyzes the reversible reaction in which hydroxymethyl group from 5,10-methylenetetrahydrofolate is transferred onto alpha-ketoisovalerate to form ketopantoate. In Saccharopolyspora erythraea (strain ATCC 11635 / DSM 40517 / JCM 4748 / NBRC 13426 / NCIMB 8594 / NRRL 2338), this protein is 3-methyl-2-oxobutanoate hydroxymethyltransferase.